A 672-amino-acid polypeptide reads, in one-letter code: ABC transporter G family member 21 (672 aa).

Residues 1-35 are compositionally biased toward polar residues; that stretch reads MMPPNEQESSFPKTPSANRHETSPVQENRFSSPSH. The segment at 1-59 is disordered; that stretch reads MMPPNEQESSFPKTPSANRHETSPVQENRFSSPSHVNPCLDDDNDHDGPSHQSRQSSVL. Residues 50 to 59 are compositionally biased toward low complexity; it reads SHQSRQSSVL. Positions 68–322 constitute an ABC transporter domain; the sequence is LKFEELTYSI…FGSIGYQPGS (255 aa). An ATP-binding site is contributed by 117 to 124; it reads GPSGSGKT. Positions 411-617 constitute an ABC transmembrane type-2 domain; it reads MQFSVLLKRG…CYKLLVGVQY (207 aa). A run of 6 helical transmembrane segments spans residues 429–449, 460–480, 512–532, 543–563, 576–596, and 649–669; these read FSGLRIFMVMSVSLLSGLLWW, VGLLFFFSIFWGFFPLFNAIF, LPMELILPTIFVTITYWMGGL, LMIVLYNVLVAQGVGLALGAI, VLMLVFLLAGGYYIQHIPGFI, and WDVLALAVMLLLYRVLAYLAL.

This sequence belongs to the ABC transporter superfamily. ABCG family. Eye pigment precursor importer (TC 3.A.1.204) subfamily.

It is found in the membrane. The protein is ABC transporter G family member 21 (ABCG21) of Arabidopsis thaliana (Mouse-ear cress).